The following is a 172-amino-acid chain: uncharacterized protein (172 aa).

A run of 4 helical transmembrane segments spans residues 1–21, 41–61, 72–92, and 136–156; these read MLFINITFACILAIRFYSLSI, NSTLLSIAHVAFYFAAIIEAN, QIGLAILIFAIAMLFYVIYEL, and FCQAKYTALVGLPIYLLILAV.

The protein localises to the cell membrane. This is an uncharacterized protein from Haemophilus influenzae (strain ATCC 51907 / DSM 11121 / KW20 / Rd).